Consider the following 308-residue polypeptide: Acetaldehyde dehydrogenase 2 (308 aa).

12-15 (SGNI) is an NAD(+) binding site. Cys127 serves as the catalytic Acyl-thioester intermediate. NAD(+) is bound by residues 162 to 170 (SAGPGTRAN) and Asn281.

The protein belongs to the acetaldehyde dehydrogenase family.

It catalyses the reaction acetaldehyde + NAD(+) + CoA = acetyl-CoA + NADH + H(+). The protein is Acetaldehyde dehydrogenase 2 of Mycobacterium marinum (strain ATCC BAA-535 / M).